The following is a 271-amino-acid chain: Ferric vulnibactin reductase VuuB (271 aa).

The region spanning 8–131 (VYPMLLDFVR…IGPAGPDPLI (124 aa)) is the FAD-binding FR-type domain.

Belongs to the SIP oxidoreductase family. As to quaternary structure, monomer. The cofactor is FAD.

It localises to the cytoplasm. It carries out the reaction 2 a Fe(II)-siderophore + NAD(+) + H(+) = 2 a Fe(III)-siderophore + NADH. Ferric-siderophore reductase involved in iron removal from the siderophores after their transport into the cell. Acts as a major ferric-vulnibactin reductase catalyzing the reduction of Fe(3+)-vulnibactin, a catecholate siderophore synthesized by V.vulnificus. The sequence is that of Ferric vulnibactin reductase VuuB from Vibrio vulnificus (strain CMCP6).